Reading from the N-terminus, the 106-residue chain is UPF0145 protein PP_2873 (106 aa).

This sequence belongs to the UPF0145 family.

The protein is UPF0145 protein PP_2873 of Pseudomonas putida (strain ATCC 47054 / DSM 6125 / CFBP 8728 / NCIMB 11950 / KT2440).